Reading from the N-terminus, the 183-residue chain is D-glycero-alpha-D-manno-heptose-1,7-bisphosphate 7-phosphatase (183 aa).

Residues cysteine 93, histidine 95, cysteine 108, and cysteine 110 each coordinate Zn(2+).

Belongs to the GmhB family.

It localises to the cytoplasm. The enzyme catalyses D-glycero-alpha-D-manno-heptose 1,7-bisphosphate + H2O = D-glycero-alpha-D-manno-heptose 1-phosphate + phosphate. The protein operates within nucleotide-sugar biosynthesis; GDP-D-glycero-alpha-D-manno-heptose biosynthesis; GDP-D-glycero-alpha-D-manno-heptose from D-glycero-alpha-D-manno-heptose 7-phosphate: step 2/3. Its function is as follows. Converts the D-glycero-alpha-D-manno-heptose 1,7-bisphosphate intermediate into D-glycero-alpha-D-manno-heptose 1-phosphate by removing the phosphate group at the C-7 position. The protein is D-glycero-alpha-D-manno-heptose-1,7-bisphosphate 7-phosphatase (gmhB2) of Photorhabdus laumondii subsp. laumondii (strain DSM 15139 / CIP 105565 / TT01) (Photorhabdus luminescens subsp. laumondii).